We begin with the raw amino-acid sequence, 374 residues long: Proteinase-activated receptor 3 (374 aa).

Positions 1 to 21 are cleaved as a signal peptide; that stretch reads MKALIFAAAGLLLLLPTFCQS. A propeptide spans 22–38 (removed for receptor activation); it reads GMENDTNNLAKPTLPIK. Asn-25 and Asn-82 each carry an N-linked (GlcNAc...) asparagine glycan. Residues 39 to 94 lie on the Extracellular side of the membrane; the sequence is TFRGAPPNSFEEFPFSALEGWTGATITVKIKCPEESASHLHVKNATMGYLTSSLST. The chain crosses the membrane as a helical span at residues 95–120; that stretch reads KLIPAIYLLVFVVGVPANAVTLWMLF. The Cytoplasmic segment spans residues 121-128; it reads FRTRSICT. Residues 129-148 form a helical membrane-spanning segment; sequence TVFYTNLAIADFLFCVTLPF. Residues 149–167 lie on the Extracellular side of the membrane; sequence KIAYHLNGNNWVFGEVLCR. Cys-166 and Cys-245 are oxidised to a cystine. The chain crosses the membrane as a helical span at residues 168 to 189; it reads ATTVIFYGNMYCSILLLACISI. Over 190–206 the chain is Cytoplasmic; sequence NRYLAIVHPFTYRGLPK. The helical transmembrane segment at 207–230 threads the bilayer; that stretch reads HTYALVTCGLVWATVFLYMLPFFI. Residues 231–260 lie on the Extracellular side of the membrane; that stretch reads LKQEYYLVQPDITTCHDVHNTCESSSPFQL. A helical transmembrane segment spans residues 261 to 280; the sequence is YYFISLAFFGFLIPFVLIIY. At 281 to 297 the chain is on the cytoplasmic side; the sequence is CYAAIIRTLNAYDHRWL. The helical transmembrane segment at 298 to 322 threads the bilayer; it reads WYVKASLLILVIFTICFAPSNIILI. Over 323 to 336 the chain is Extracellular; sequence IHHANYYYNNTDGL. An N-linked (GlcNAc...) asparagine glycan is attached at Asn-331. Residues 337–361 form a helical membrane-spanning segment; that stretch reads YFIYLIALCLGSLNSCLDPFLYFLM. The Cytoplasmic portion of the chain corresponds to 362-374; it reads SKTRNHSTAYLTK.

It belongs to the G-protein coupled receptor 1 family. As to quaternary structure, interacts with INSC/inscuteable and probably GPSM2. A proteolytic cleavage generates a new N-terminus that functions as a tethered ligand. In terms of tissue distribution, highest expression in the megakaryocytes of the bone marrow, lower in mature megakaryocytes, in platelets and in a variety of other tissues such as heart and gut.

Its subcellular location is the cell membrane. Its function is as follows. Receptor for activated thrombin coupled to G proteins that stimulate phosphoinositide hydrolysis. This chain is Proteinase-activated receptor 3 (F2RL2), found in Homo sapiens (Human).